Here is an 814-residue protein sequence, read N- to C-terminus: Phenylalanine--tRNA ligase beta subunit (814 aa).

In terms of domain architecture, tRNA-binding spans 39–153; that stretch reads SARAKGVVVG…ELPALGAPVA (115 aa). The region spanning 414-498 is the B5 domain; it reads ADASSVLLRR…RLVGFDRFGA (85 aa). Mg(2+) is bound by residues Asp476, Asp482, Glu485, and Glu486. In terms of domain architecture, FDX-ACB spans 720–813; that stretch reads PTVPASERDL…LVKQHGAELR (94 aa).

This sequence belongs to the phenylalanyl-tRNA synthetase beta subunit family. Type 1 subfamily. In terms of assembly, tetramer of two alpha and two beta subunits. The cofactor is Mg(2+).

The protein resides in the cytoplasm. The enzyme catalyses tRNA(Phe) + L-phenylalanine + ATP = L-phenylalanyl-tRNA(Phe) + AMP + diphosphate + H(+). This chain is Phenylalanine--tRNA ligase beta subunit, found in Parasynechococcus marenigrum (strain WH8102).